A 338-amino-acid chain; its full sequence is tRNA-cytidine(32) 2-sulfurtransferase (338 aa).

The PP-loop motif signature appears at S86–S91. Residues C161, C164, and C252 each coordinate [4Fe-4S] cluster.

This sequence belongs to the TtcA family. Homodimer. It depends on Mg(2+) as a cofactor. The cofactor is [4Fe-4S] cluster.

The protein localises to the cytoplasm. The catalysed reaction is cytidine(32) in tRNA + S-sulfanyl-L-cysteinyl-[cysteine desulfurase] + AH2 + ATP = 2-thiocytidine(32) in tRNA + L-cysteinyl-[cysteine desulfurase] + A + AMP + diphosphate + H(+). It participates in tRNA modification. Catalyzes the ATP-dependent 2-thiolation of cytidine in position 32 of tRNA, to form 2-thiocytidine (s(2)C32). The sulfur atoms are provided by the cysteine/cysteine desulfurase (IscS) system. The sequence is that of tRNA-cytidine(32) 2-sulfurtransferase from Albidiferax ferrireducens (strain ATCC BAA-621 / DSM 15236 / T118) (Rhodoferax ferrireducens).